A 780-amino-acid polypeptide reads, in one-letter code: ATPase family gene 2 protein (780 aa).

A compositionally biased stretch (low complexity) spans 1–23 (MAPKSSSSGSKKKSSASSNSADA). Positions 1–26 (MAPKSSSSGSKKKSSASSNSADAKAS) are disordered. ATP-binding positions include 286-293 (GPPGTGKT) and 557-564 (GPPGCSKT).

The protein belongs to the AAA ATPase family. AFG2 subfamily. As to quaternary structure, homohexamer; ATP binding induces oligomerization. Forms a ring-shaped particle of about 12 nm diameter, that displays 6-fold radial symmetry. Associates with cytoplasmic pre-60S ribosomal particles containing ARX1, ALB1, RLP24 and NOG1. Binds to pre-60S ribosomal particles soon after their export from the nucleus and is released before REI1 and LSG1 are incorporated into the particles. Hexameric form interacts with RLP24 (via C-terminal); the interaction recruits AFG2 to pre-60S ribosomal particles and promotes AFG2 ATPase activity and RLP24 release from pre-60S ribosomal particles. Interacts (via N-terminus) with nucleoporin NUP116 (via N-terminus); the interaction is required for RLP24 release from pre-60S ribosomal particles.

The protein resides in the cytoplasm. The catalysed reaction is ATP + H2O = ADP + phosphate + H(+). With respect to regulation, the hexamer is activated by RLP24 during pre-60S ribosomal particle maturation; RLP24 activates ATPase activity of both ATP-binding regions and increases cooperativity between AFG2 subunits. The second ATP-binding region is inhibited by diazaborine; the inhibition requires prior ATP binding specifically to the second ATP-binding region. ATP-dependent chaperone which uses the energy provided by ATP hydrolysis to generate mechanical force to disassemble protein complexes. Plays an essential role in the cytoplasmic maturation steps of pre-60S ribosomal particles by promoting the release of shuttling protein RLP24 from the pre-ribosomal particles. This step facilitates the subsequent release of other shuttling proteins such as NOG1 and allows the transition of the pre-ribosomal particles to later maturation forms that bind REI1. Essential for viability. This is ATPase family gene 2 protein from Saccharomyces cerevisiae (strain ATCC 204508 / S288c) (Baker's yeast).